Consider the following 1383-residue polypeptide: DNA-directed RNA polymerase subunit beta'' (1383 aa).

Residues C220, C289, C296, and C299 each contribute to the Zn(2+) site.

This sequence belongs to the RNA polymerase beta' chain family. RpoC2 subfamily. In terms of assembly, in plastids the minimal PEP RNA polymerase catalytic core is composed of four subunits: alpha, beta, beta', and beta''. When a (nuclear-encoded) sigma factor is associated with the core the holoenzyme is formed, which can initiate transcription. Requires Zn(2+) as cofactor.

Its subcellular location is the plastid. It localises to the chloroplast. It carries out the reaction RNA(n) + a ribonucleoside 5'-triphosphate = RNA(n+1) + diphosphate. Functionally, DNA-dependent RNA polymerase catalyzes the transcription of DNA into RNA using the four ribonucleoside triphosphates as substrates. This is DNA-directed RNA polymerase subunit beta'' from Oenothera parviflora (Small-flowered evening primrose).